Consider the following 83-residue polypeptide: Small ribosomal subunit protein uS19m (83 aa).

Belongs to the universal ribosomal protein uS19 family.

Its subcellular location is the mitochondrion. The sequence is that of Small ribosomal subunit protein uS19m (RPS19) from Tetraselmis subcordiformis (Marine green alga).